Reading from the N-terminus, the 360-residue chain is Cuticle collagen dpy-2 (360 aa).

Triple-helical region regions lie at residues 123-152 (GERG…PGTT), 174-230 (GPRG…KGRT), and 238-303 (GPPG…PGTC). 2 disordered regions span residues 127 to 158 (PSGD…ASCI) and 174 to 360 (GPRG…IRKW). A compositionally biased stretch (gly residues) spans 189 to 198 (GEYGIGGRPG). Positions 242–258 (DSGLPGPWGPPGSAGMP) are enriched in low complexity. Over residues 273-288 (PGPPGAPGPGGMPGPN) the composition is skewed to pro residues.

The protein belongs to the cuticular collagen family. As to quaternary structure, collagen polypeptide chains are complexed within the cuticle by disulfide bonds and other types of covalent cross-links.

Its function is as follows. Nematode cuticles are composed largely of collagen-like proteins. The cuticle functions both as an exoskeleton and as a barrier to protect the worm from its environment. Mutations in dpy-2 affects the body shape. The polypeptide is Cuticle collagen dpy-2 (dpy-2) (Caenorhabditis elegans).